A 340-amino-acid polypeptide reads, in one-letter code: Ferrochelatase (340 aa).

Fe cation is bound by residues His-189 and Glu-292.

The protein belongs to the ferrochelatase family.

It is found in the cytoplasm. The catalysed reaction is heme b + 2 H(+) = protoporphyrin IX + Fe(2+). Its pathway is porphyrin-containing compound metabolism; protoheme biosynthesis; protoheme from protoporphyrin-IX: step 1/1. Catalyzes the ferrous insertion into protoporphyrin IX. The protein is Ferrochelatase of Pseudomonas paraeruginosa (strain DSM 24068 / PA7) (Pseudomonas aeruginosa (strain PA7)).